The sequence spans 216 residues: Uracil phosphoribosyltransferase (216 aa).

30 to 34 contributes to the GTP binding site; the sequence is KNLVR. Residues R80, R105, and 140–148 each bind 5-phospho-alpha-D-ribose 1-diphosphate; that span reads DPMIATAST. Residues I203 and 208-210 each bind uracil; that span reads GDA. D209 contacts 5-phospho-alpha-D-ribose 1-diphosphate.

Belongs to the UPRTase family. Requires Mg(2+) as cofactor.

It catalyses the reaction UMP + diphosphate = 5-phospho-alpha-D-ribose 1-diphosphate + uracil. Its pathway is pyrimidine metabolism; UMP biosynthesis via salvage pathway; UMP from uracil: step 1/1. With respect to regulation, allosterically activated by GTP. In terms of biological role, catalyzes the conversion of uracil and 5-phospho-alpha-D-ribose 1-diphosphate (PRPP) to UMP and diphosphate. This chain is Uracil phosphoribosyltransferase, found in Saccharolobus islandicus (strain Y.N.15.51 / Yellowstone #2) (Sulfolobus islandicus).